Here is a 202-residue protein sequence, read N- to C-terminus: LexA repressor (202 aa).

Positions 28-48 (RAEIAQQLGFRSPNAAEEHLK) form a DNA-binding region, H-T-H motif. Active-site for autocatalytic cleavage activity residues include S119 and K156.

The protein belongs to the peptidase S24 family. In terms of assembly, homodimer.

It carries out the reaction Hydrolysis of Ala-|-Gly bond in repressor LexA.. Represses a number of genes involved in the response to DNA damage (SOS response), including recA and lexA. Binds to the 16 bp palindromic sequence 5'-CTGTATATATATACAG-3'. In the presence of single-stranded DNA, RecA interacts with LexA causing an autocatalytic cleavage which disrupts the DNA-binding part of LexA, leading to derepression of the SOS regulon and eventually DNA repair. The polypeptide is LexA repressor (Pectobacterium carotovorum subsp. carotovorum (Erwinia carotovora subsp. carotovora)).